The sequence spans 686 residues: MRRSGTALSFLWTERVREPVDSGVAPVSPLGGGVILRRFSGTLLLPPLSSRLGSSGEAESAAHVVFTIGTQGTQRNLGSAQSSFDLENGLPGGKGLLDAQSGPSLGRALQPPVHHVQRRESFLYRSDSDHEPSPKAVSRTSSAASDLHGEDMIVTPFAQVLASLRTVRNNVAALAHGPGSATRQVLLGTPPHSSQQAAPTEDSGLQLVQETLEELDWCLEQLETLQTRRSVGEMASNKFKRMLNRELSYLSETSRSGNQVSEYISQTFLDQQAEVELPQPPTEDDPWPMAQITELRRSSHTSLPTAAIPRFGVQTDQEEQLAKELEDTNKWGLDVFKVAELSGNRPLTAVIFSVFQERDLLKTFQIPADTLLAYLLTLEGHYHSDVAYHNSMHAADVVQSAHVLLGTPALEAVFTDLEVLAAIFACAIHDVDHPGVSNQFLINTNSELALMYNDSSVLENHHLAVGFKLLQGENCDIFRNLSTKQRLSLRRMVIDMVLATDMSKHMSLLADLKTMVETKKVTSLGVLLLDNYSDRIQVLQSLVHCADLSNPAKPLPLYRQWTERIMAEFFQQGDRERESGLDISPMCDKHTASMEKSQVGFIDYIAQPLWETWADLVHPDAQELLDTLEDNREWYQSRIPCSPPHTMGSDRFKFELTLEEAEEEEEEEDEGQCTALNRESSELPST.

Phosphoserine occurs at positions 9, 28, 40, and 83. 2 disordered regions span residues 88-116 (NGLP…VHHV) and 124-143 (YRSD…TSSA). Residues 124–133 (YRSDSDHEPS) show a composition bias toward basic and acidic residues. The 330-residue stretch at 313–642 (VQTDQEEQLA…EWYQSRIPCS (330 aa)) folds into the PDEase domain. Residue H389 is the Proton donor of the active site. 3',5'-cyclic AMP is bound at residue H389. AMP contacts are provided by H389 and H393. Positions 393, 429, 430, and 547 each coordinate Zn(2+). 4 residues coordinate AMP: D430, D547, Q598, and F601. Position 430 (D430) interacts with Mg(2+). D430 lines the Mn(2+) pocket. 3',5'-cyclic AMP is bound by residues Q598 and F601. S642 bears the Phosphoserine mark. Residues 660-671 (EAEEEEEEEDEG) are compositionally biased toward acidic residues. The interval 660-686 (EAEEEEEEEDEGQCTALNRESSELPST) is disordered. Residues 674–686 (TALNRESSELPST) show a composition bias toward polar residues.

This sequence belongs to the cyclic nucleotide phosphodiesterase family. PDE4 subfamily. In terms of assembly, part of a complex containing AKAP5, ADCY5, ADCY6 and PKD2. Requires Zn(2+) as cofactor. It depends on Mg(2+) as a cofactor. Mn(2+) serves as cofactor.

It localises to the cell projection. It is found in the cilium. It carries out the reaction 3',5'-cyclic AMP + H2O = AMP + H(+). It functions in the pathway purine metabolism; 3',5'-cyclic AMP degradation; AMP from 3',5'-cyclic AMP: step 1/1. Its function is as follows. Hydrolyzes the second messenger cAMP, which is a key regulator of many important physiological processes. In Mus musculus (Mouse), this protein is 3',5'-cyclic-AMP phosphodiesterase 4C.